A 157-amino-acid polypeptide reads, in one-letter code: uncharacterized protein (157 aa).

Positions 1–19 (MRKYLIILVLLLFLSSSFG) are cleaved as a signal peptide.

This is an uncharacterized protein from Methanocaldococcus jannaschii (strain ATCC 43067 / DSM 2661 / JAL-1 / JCM 10045 / NBRC 100440) (Methanococcus jannaschii).